A 64-amino-acid chain; its full sequence is Large ribosomal subunit protein bL35 (64 aa).

The tract at residues 1–21 (MPKMKTNRGAAKRFKVKKSGK) is disordered. Residues 10 to 21 (AAKRFKVKKSGK) are compositionally biased toward basic residues.

The protein belongs to the bacterial ribosomal protein bL35 family.

This Nautilia profundicola (strain ATCC BAA-1463 / DSM 18972 / AmH) protein is Large ribosomal subunit protein bL35.